Consider the following 159-residue polypeptide: Large ribosomal subunit protein uL15 (159 aa).

A disordered region spans residues Met-1–Asn-39. The span at Arg-21 to Val-35 shows a compositional bias: gly residues.

This sequence belongs to the universal ribosomal protein uL15 family. In terms of assembly, part of the 50S ribosomal subunit.

In terms of biological role, binds to the 23S rRNA. The polypeptide is Large ribosomal subunit protein uL15 (Hyphomonas neptunium (strain ATCC 15444)).